A 315-amino-acid polypeptide reads, in one-letter code: Protoheme IX farnesyltransferase (315 aa).

The next 9 helical transmembrane spans lie at 32 to 52, 53 to 73, 93 to 113, 120 to 140, 153 to 173, 180 to 200, 226 to 246, 249 to 269, and 295 to 315; these read VMSL…GHMN, PVLA…SGAL, IPAG…LSAF, LMVN…YAVI, IVIG…AATG, LVLF…LSLF, ALFY…MGFA, FYGV…WRLW, and IFAV…FGVF.

This sequence belongs to the UbiA prenyltransferase family. Protoheme IX farnesyltransferase subfamily.

The protein localises to the cell inner membrane. It carries out the reaction heme b + (2E,6E)-farnesyl diphosphate + H2O = Fe(II)-heme o + diphosphate. It functions in the pathway porphyrin-containing compound metabolism; heme O biosynthesis; heme O from protoheme: step 1/1. Converts heme B (protoheme IX) to heme O by substitution of the vinyl group on carbon 2 of heme B porphyrin ring with a hydroxyethyl farnesyl side group. This chain is Protoheme IX farnesyltransferase, found in Brucella canis (strain ATCC 23365 / NCTC 10854 / RM-666).